Consider the following 230-residue polypeptide: Acyl-protein thioesterase 1 (230 aa).

Catalysis depends on charge relay system residues serine 119, aspartate 174, and histidine 208. Lysine 224 is subject to N6-acetyllysine.

The protein belongs to the AB hydrolase superfamily. AB hydrolase 2 family. In terms of assembly, homodimer.

Its subcellular location is the cytoplasm. It localises to the cell membrane. The protein resides in the nucleus membrane. The protein localises to the endoplasmic reticulum. It carries out the reaction S-hexadecanoyl-L-cysteinyl-[protein] + H2O = L-cysteinyl-[protein] + hexadecanoate + H(+). The enzyme catalyses 1-hexadecanoyl-sn-glycero-3-phosphocholine + H2O = sn-glycerol 3-phosphocholine + hexadecanoate + H(+). The catalysed reaction is a 1-(9Z-octadecenoyl)-2-acyl-sn-glycero-3-phosphocholine + H2O = a 2-acyl-sn-glycero-3-phosphocholine + (9Z)-octadecenoate + H(+). Acts as an acyl-protein thioesterase. Hydrolyzes fatty acids from S-acylated cysteine residues in proteins such as trimeric G alpha proteins or HRAS. Acts as a palmitoyl thioesterase that catalyzes depalmitoylation of proteins, such as ADRB2, KCNMA1 and SQSTM1. Acts as a negative regulator of autophagy by mediating palmitoylation of SQSTM1, decreasing affinity between SQSTM1 and ATG8 proteins and recruitment of ubiquitinated cargo proteins to autophagosomes. Acts as a lysophospholipase and hydrolyzes lysophosphatidylcholine (lyso-PC). Also hydrolyzes lysophosphatidylethanolamine (lyso-PE), lysophosphatidylinositol (lyso-PI) and lysophosphatidylserine (lyso-PS). Has much higher thioesterase activity than lysophospholipase activity. Contributes to the production of lysophosphatidic acid (LPA) during blood coagulation by recognizing and cleaving plasma phospholipids to generate lysophospholipids which in turn act as substrates for ENPP2 to produce LPA. This chain is Acyl-protein thioesterase 1 (LYPLA1), found in Pongo abelii (Sumatran orangutan).